A 564-amino-acid chain; its full sequence is Dihydroxy-acid dehydratase (564 aa).

C55 is a binding site for [2Fe-2S] cluster. Residue D87 participates in Mg(2+) binding. C128 is a [2Fe-2S] cluster binding site. Mg(2+)-binding residues include D129 and K130. The residue at position 130 (K130) is an N6-carboxylysine. C200 is a binding site for [2Fe-2S] cluster. Residue E452 coordinates Mg(2+). The active-site Proton acceptor is the S478.

This sequence belongs to the IlvD/Edd family. As to quaternary structure, homodimer. It depends on [2Fe-2S] cluster as a cofactor. Mg(2+) is required as a cofactor.

It catalyses the reaction (2R)-2,3-dihydroxy-3-methylbutanoate = 3-methyl-2-oxobutanoate + H2O. The enzyme catalyses (2R,3R)-2,3-dihydroxy-3-methylpentanoate = (S)-3-methyl-2-oxopentanoate + H2O. The protein operates within amino-acid biosynthesis; L-isoleucine biosynthesis; L-isoleucine from 2-oxobutanoate: step 3/4. It participates in amino-acid biosynthesis; L-valine biosynthesis; L-valine from pyruvate: step 3/4. Functions in the biosynthesis of branched-chain amino acids. Catalyzes the dehydration of (2R,3R)-2,3-dihydroxy-3-methylpentanoate (2,3-dihydroxy-3-methylvalerate) into 2-oxo-3-methylpentanoate (2-oxo-3-methylvalerate) and of (2R)-2,3-dihydroxy-3-methylbutanoate (2,3-dihydroxyisovalerate) into 2-oxo-3-methylbutanoate (2-oxoisovalerate), the penultimate precursor to L-isoleucine and L-valine, respectively. The polypeptide is Dihydroxy-acid dehydratase (Polaromonas sp. (strain JS666 / ATCC BAA-500)).